Reading from the N-terminus, the 228-residue chain is Ribose-5-phosphate isomerase A (228 aa).

Substrate-binding positions include 31–34, 85–88, and 97–100; these read TGST, DGAD, and KGGG. Residue E106 is the Proton acceptor of the active site. K124 contributes to the substrate binding site.

The protein belongs to the ribose 5-phosphate isomerase family. Homodimer.

The enzyme catalyses aldehydo-D-ribose 5-phosphate = D-ribulose 5-phosphate. It participates in carbohydrate degradation; pentose phosphate pathway; D-ribose 5-phosphate from D-ribulose 5-phosphate (non-oxidative stage): step 1/1. Its function is as follows. Catalyzes the reversible conversion of ribose-5-phosphate to ribulose 5-phosphate. The chain is Ribose-5-phosphate isomerase A from Haloarcula marismortui (strain ATCC 43049 / DSM 3752 / JCM 8966 / VKM B-1809) (Halobacterium marismortui).